The chain runs to 275 residues: Phosphatidylglycerol--prolipoprotein diacylglyceryl transferase (275 aa).

7 consecutive transmembrane segments (helical) span residues 22-42, 61-81, 96-116, 125-145, 177-197, 204-224, and 238-258; these read LSVR…MWLA, LLFY…VLFY, IWTG…AMIW, FFTV…VGRI, SQLY…NLFW, GAIS…VEFV, and ISMG…MVWA. Arg144 lines the a 1,2-diacyl-sn-glycero-3-phospho-(1'-sn-glycerol) pocket.

It belongs to the Lgt family.

The protein resides in the cell inner membrane. The catalysed reaction is L-cysteinyl-[prolipoprotein] + a 1,2-diacyl-sn-glycero-3-phospho-(1'-sn-glycerol) = an S-1,2-diacyl-sn-glyceryl-L-cysteinyl-[prolipoprotein] + sn-glycerol 1-phosphate + H(+). The protein operates within protein modification; lipoprotein biosynthesis (diacylglyceryl transfer). In terms of biological role, catalyzes the transfer of the diacylglyceryl group from phosphatidylglycerol to the sulfhydryl group of the N-terminal cysteine of a prolipoprotein, the first step in the formation of mature lipoproteins. The polypeptide is Phosphatidylglycerol--prolipoprotein diacylglyceryl transferase (Aeromonas salmonicida (strain A449)).